The sequence spans 472 residues: 3-isopropylmalate dehydratase large subunit (472 aa).

3 residues coordinate [4Fe-4S] cluster: C347, C407, and C410.

Belongs to the aconitase/IPM isomerase family. LeuC type 1 subfamily. Heterodimer of LeuC and LeuD. [4Fe-4S] cluster is required as a cofactor.

It carries out the reaction (2R,3S)-3-isopropylmalate = (2S)-2-isopropylmalate. It functions in the pathway amino-acid biosynthesis; L-leucine biosynthesis; L-leucine from 3-methyl-2-oxobutanoate: step 2/4. In terms of biological role, catalyzes the isomerization between 2-isopropylmalate and 3-isopropylmalate, via the formation of 2-isopropylmaleate. This is 3-isopropylmalate dehydratase large subunit from Bacillus subtilis (strain 168).